The sequence spans 89 residues: Small ribosomal subunit protein uS15 (89 aa).

The protein belongs to the universal ribosomal protein uS15 family. In terms of assembly, part of the 30S ribosomal subunit. Forms a bridge to the 50S subunit in the 70S ribosome, contacting the 23S rRNA.

One of the primary rRNA binding proteins, it binds directly to 16S rRNA where it helps nucleate assembly of the platform of the 30S subunit by binding and bridging several RNA helices of the 16S rRNA. In terms of biological role, forms an intersubunit bridge (bridge B4) with the 23S rRNA of the 50S subunit in the ribosome. This is Small ribosomal subunit protein uS15 from Photobacterium profundum (strain SS9).